Consider the following 81-residue polypeptide: MEKLTILLLVAAVLMSIQALNQEQHQRAKINLLSKRKAPAERWWRWGGCLLWFGRCTKDSECCSDSCDRTYCELARFPEGW.

The first 19 residues, 1-19 (MEKLTILLLVAAVLMSIQA), serve as a signal peptide directing secretion. Positions 20–44 (LNQEQHQRAKINLLSKRKAPAERWW) are excised as a propeptide. 3 disulfides stabilise this stretch: cysteine 49–cysteine 63, cysteine 56–cysteine 67, and cysteine 62–cysteine 72.

The protein belongs to the conotoxin O2 superfamily. As to expression, expressed by the venom duct.

It localises to the secreted. Its function is as follows. Inhibits voltage-gated ion channels. The polypeptide is Conotoxin Vc6.13 (Conus victoriae (Queen Victoria cone)).